A 67-amino-acid chain; its full sequence is Conotoxin Cl14.2b (67 aa).

Positions 1–20 (MNVTVMFLVLLLLTMPLTDG) are cleaved as a signal peptide. A propeptide spanning residues 21 to 48 (FNIRATNGGELFGPVQRDAGNVLDHGFQ) is cleaved from the precursor.

This sequence belongs to the conotoxin L superfamily. In terms of processing, contains 2 disulfide bonds. Expressed by the venom duct.

The protein resides in the secreted. In terms of biological role, increases calcium current amplitude through Cav1.2/Cav1.3 channels in rat pancreatic beta-cells, which is a prerequisite for eliciting insulin secretion. Stimulates insulin secretion in NIT-1 insulinoma cell lines. In vivo, significantly decreases mice blood glucose levels as of 45 minutes after treatment, similarly to insulin treatment. Has a potential therapeutic use in endocrinal pathologies such as early stages of type 2 diabetes where the pancreas's capability to produce insulin is still effective. The chain is Conotoxin Cl14.2b from Californiconus californicus (California cone).